The primary structure comprises 741 residues: uncharacterized protein (741 aa).

Residues 1–17 (MDSNTNENNSHASSNER) are compositionally biased toward polar residues. Residues 1–50 (MDSNTNENNSHASSNERQSSEGHDDYLNRNPNSEATEGEEGTHPTTGTQP) are disordered. A compositionally biased stretch (basic and acidic residues) spans 18–27 (QSSEGHDDYL). Residues 107 to 150 (CPICYDDMNENDEKQATKMPCGHIFGKNCLQKWLENHCTCPLCR) form an RING-type 1; degenerate zinc finger. Polar residues-rich tracts occupy residues 177-193 (GNQG…SNGV), 252-263 (PDSNTSTPTTRS), and 277-302 (NASS…NAFF). Disordered stretches follow at residues 177–214 (GNQG…RTGV), 238–387 (SATN…NTNR), 500–543 (QPAV…PGIT), 561–619 (ENRM…TPTH), 638–688 (STPS…PQCQ), and 713–741 (RCQQ…EEHK). The segment covering 316-332 (TSNLTSNSGSMTNSTST) has biased composition (low complexity). Polar residues-rich tracts occupy residues 333–344 (DLPTSNLPSQNA) and 357–386 (PPNL…ANTN). Polar residues-rich tracts occupy residues 563–586 (RMNQ…SINV), 604–619 (ENSS…TPTH), and 652–661 (SKVSSGTSTP). Residues 687–736 (CQLEDQGICDPNDRFVHFECGHSVHERCQQSTSNSENQMDEEIGECPKCR) form an RING-type 2; degenerate zinc finger. The span at 731-741 (ECPKCRNEEHK) shows a compositional bias: basic and acidic residues.

It is found in the nucleus. This is an uncharacterized protein from Schizosaccharomyces pombe (strain 972 / ATCC 24843) (Fission yeast).